Reading from the N-terminus, the 303-residue chain is tRNA dimethylallyltransferase (303 aa).

9–16 (GPTASGKS) contacts ATP. Substrate is bound at residue 11 to 16 (TASGKS). An interaction with substrate tRNA region spans residues 34 to 37 (DSKQ).

The protein belongs to the IPP transferase family. As to quaternary structure, monomer. Requires Mg(2+) as cofactor.

The catalysed reaction is adenosine(37) in tRNA + dimethylallyl diphosphate = N(6)-dimethylallyladenosine(37) in tRNA + diphosphate. Its function is as follows. Catalyzes the transfer of a dimethylallyl group onto the adenine at position 37 in tRNAs that read codons beginning with uridine, leading to the formation of N6-(dimethylallyl)adenosine (i(6)A). The polypeptide is tRNA dimethylallyltransferase (Ehrlichia chaffeensis (strain ATCC CRL-10679 / Arkansas)).